Consider the following 345-residue polypeptide: uncharacterized protein (345 aa).

3 Solcar repeats span residues 80–153 (MSFF…MKSR), 162–246 (SDPQ…LKLK), and 256–339 (NLAH…ILNF). 6 helical membrane-spanning segments follow: residues 83 to 103 (FEALGAGICAGLAVDLSLFPI), 128 to 148 (GLGSILVGSAPGASLFFTTYE), 220 to 240 (AGYGITIAREIPFTLIQFPIW), 262 to 282 (AISGSIAGGIAAALTTPFDVV), 296 to 316 (VFTIKSIVAHEGFLALYKGIV), and 319 to 339 (VLWLSGGGAIFLGCYDVILNF).

Belongs to the mitochondrial carrier (TC 2.A.29) family.

It is found in the mitochondrion inner membrane. This is an uncharacterized protein from Schizosaccharomyces pombe (strain 972 / ATCC 24843) (Fission yeast).